The chain runs to 490 residues: Membrane-bound lytic murein transglycosylase F (490 aa).

Positions Met-1–Ala-32 are cleaved as a signal peptide. A non-LT domain region spans residues Pro-33 to Val-269. Positions Asp-270 to Leu-490 are LT domain. Residue Glu-316 is part of the active site. Residues Ala-467 to Leu-490 form a disordered region. Basic and acidic residues predominate over residues Thr-479 to Leu-490.

In the N-terminal section; belongs to the bacterial solute-binding protein 3 family. This sequence in the C-terminal section; belongs to the transglycosylase Slt family.

The protein resides in the cell outer membrane. It carries out the reaction Exolytic cleavage of the (1-&gt;4)-beta-glycosidic linkage between N-acetylmuramic acid (MurNAc) and N-acetylglucosamine (GlcNAc) residues in peptidoglycan, from either the reducing or the non-reducing ends of the peptidoglycan chains, with concomitant formation of a 1,6-anhydrobond in the MurNAc residue.. In terms of biological role, murein-degrading enzyme that degrades murein glycan strands and insoluble, high-molecular weight murein sacculi, with the concomitant formation of a 1,6-anhydromuramoyl product. Lytic transglycosylases (LTs) play an integral role in the metabolism of the peptidoglycan (PG) sacculus. Their lytic action creates space within the PG sacculus to allow for its expansion as well as for the insertion of various structures such as secretion systems and flagella. The protein is Membrane-bound lytic murein transglycosylase F of Pseudomonas aeruginosa (strain ATCC 15692 / DSM 22644 / CIP 104116 / JCM 14847 / LMG 12228 / 1C / PRS 101 / PAO1).